The sequence spans 374 residues: Speckle-type POZ protein (374 aa).

The 131-residue stretch at 31–161 (KFSYMWTINN…DDKLTLFCEV (131 aa)) folds into the MATH domain. Positions 71 to 191 (VNPKGLDEES…PECRLADELG (121 aa)) are required for nuclear localization. The segment at 123-133 (YRFVQGKDWGF) is important for binding substrate proteins. In terms of domain architecture, BTB spans 173–297 (QNTMNMVKVP…MCEDALCSNL (125 aa)). Important for homodimerization stretches follow at residues 186 to 217 (LADE…HKAI) and 297 to 355 (LSVE…AYRS).

It belongs to the Tdpoz family. In terms of assembly, interacts with GLI2 and GLI3. Homodimer and homooligomer. Heterodimer with SPOPL. Each dimer interacts with two CUL3 molecules. Part of cullin-RING-based BCR (BTB-CUL3-RBX1) E3 ubiquitin-protein ligase complexes that contain CUL3 and homodimeric SPOP, or the heterodimer formed by SPOP and SPOPL, plus a target protein, such as MACROH2A1, PDX1/IPF1, BMI1, BRMS1 and DAXX. Interacts with IRF1; this interaction mediates IRF1 proteasomal degradation. Interacts with HNF1A.

It is found in the nucleus. Its subcellular location is the nucleus speckle. It functions in the pathway protein modification; protein ubiquitination. Component of a cullin-RING-based BCR (BTB-CUL3-RBX1) E3 ubiquitin-protein ligase complex that mediates the ubiquitination of target proteins, leading most often to their proteasomal degradation. In complex with CUL3, involved in ubiquitination and proteasomal degradation of BRMS1, DAXX, PDX1/IPF1, GLI2 and GLI3. In complex with CUL3, involved in ubiquitination of MACROH2A1 and BMI1; this does not lead to their proteasomal degradation. Inhibits transcriptional activation of PDX1/IPF1 targets, such as insulin, by promoting PDX1/IPF1 degradation. The cullin-RING-based BCR (BTB-CUL3-RBX1) E3 ubiquitin-protein ligase complex containing homodimeric SPOP has higher ubiquitin ligase activity than the complex that contains the heterodimer formed by SPOP and SPOPL. Involved in the regulation of bromodomain and extra-terminal motif (BET) proteins BRD2, BRD3, BRD4 stability.Plays an essential role for proper translation, but not for their degradation, of critical DNA replication licensing factors CDT1 and CDC6, thereby participating in DNA synthesis and cell proliferation. Regulates interferon regulatory factor 1/IRF1 proteasomal turnover by targeting S/T-rich degrons in IRF1. Involved in ubiquitination of BRDT and promotes its degradation, thereby regulates histone removal in early condensing spermatids prior to histone-to-protamine exchange. In Bos taurus (Bovine), this protein is Speckle-type POZ protein (SPOP).